The primary structure comprises 81 residues: Large ribosomal subunit protein bL27 (81 aa).

Residues 1–11 (MATSKSGGSSK) show a composition bias toward polar residues. Residues 1 to 23 (MATSKSGGSSKNGRDSISKRLGV) are disordered.

Belongs to the bacterial ribosomal protein bL27 family.

This is Large ribosomal subunit protein bL27 from Borrelia garinii subsp. bavariensis (strain ATCC BAA-2496 / DSM 23469 / PBi) (Borreliella bavariensis).